A 270-amino-acid chain; its full sequence is Putative pyruvate, phosphate dikinase regulatory protein 2 (270 aa).

151–158 (GVSRTSKT) is a binding site for ADP.

It belongs to the pyruvate, phosphate/water dikinase regulatory protein family. PDRP subfamily.

The enzyme catalyses N(tele)-phospho-L-histidyl/L-threonyl-[pyruvate, phosphate dikinase] + ADP = N(tele)-phospho-L-histidyl/O-phospho-L-threonyl-[pyruvate, phosphate dikinase] + AMP + H(+). It carries out the reaction N(tele)-phospho-L-histidyl/O-phospho-L-threonyl-[pyruvate, phosphate dikinase] + phosphate + H(+) = N(tele)-phospho-L-histidyl/L-threonyl-[pyruvate, phosphate dikinase] + diphosphate. Functionally, bifunctional serine/threonine kinase and phosphorylase involved in the regulation of the pyruvate, phosphate dikinase (PPDK) by catalyzing its phosphorylation/dephosphorylation. The chain is Putative pyruvate, phosphate dikinase regulatory protein 2 from Listeria innocua serovar 6a (strain ATCC BAA-680 / CLIP 11262).